We begin with the raw amino-acid sequence, 126 residues long: Small ribosomal subunit protein uS12m (126 aa).

Disordered stretches follow at residues 1–27 (MPTM…LNKC) and 106–126 (GIPG…KDYI). Composition is skewed to basic residues over residues 12–23 (RESKRRTKRTRA) and 109–120 (GRRRGRSKYGTK).

It belongs to the universal ribosomal protein uS12 family.

The protein localises to the mitochondrion. Its function is as follows. Protein S12 is involved in the translation initiation step. In Marchantia polymorpha (Common liverwort), this protein is Small ribosomal subunit protein uS12m (RPS12).